Here is a 600-residue protein sequence, read N- to C-terminus: tRNA(Ile)-lysidine synthase, chloroplastic (600 aa).

35–40 (SGGQDS) is an ATP binding site.

This sequence belongs to the tRNA(Ile)-lysidine synthase family.

The protein resides in the plastid. The protein localises to the chloroplast. It carries out the reaction cytidine(34) in tRNA(Ile2) + L-lysine + ATP = lysidine(34) in tRNA(Ile2) + AMP + diphosphate + H(+). In terms of biological role, ligates lysine onto the cytidine present at position 34 of the AUA codon-specific tRNA(Ile) that contains the anticodon CAU, in an ATP-dependent manner. Cytidine is converted to lysidine, thus changing the amino acid specificity of the tRNA from methionine to isoleucine. The chain is tRNA(Ile)-lysidine synthase, chloroplastic from Tupiella akineta (Green alga).